Reading from the N-terminus, the 222-residue chain is Probable transaldolase (222 aa).

Lys91 (schiff-base intermediate with substrate) is an active-site residue.

Belongs to the transaldolase family. Type 3B subfamily.

It localises to the cytoplasm. The catalysed reaction is D-sedoheptulose 7-phosphate + D-glyceraldehyde 3-phosphate = D-erythrose 4-phosphate + beta-D-fructose 6-phosphate. It participates in carbohydrate degradation; pentose phosphate pathway; D-glyceraldehyde 3-phosphate and beta-D-fructose 6-phosphate from D-ribose 5-phosphate and D-xylulose 5-phosphate (non-oxidative stage): step 2/3. Transaldolase is important for the balance of metabolites in the pentose-phosphate pathway. This Chlorobium phaeovibrioides (strain DSM 265 / 1930) (Prosthecochloris vibrioformis (strain DSM 265)) protein is Probable transaldolase.